Reading from the N-terminus, the 77-residue chain is DNA-directed RNA polymerase subunit Rpo5 (77 aa).

This sequence belongs to the archaeal Rpo5/eukaryotic RPB5 RNA polymerase subunit family. As to quaternary structure, part of the RNA polymerase complex.

Its subcellular location is the cytoplasm. The enzyme catalyses RNA(n) + a ribonucleoside 5'-triphosphate = RNA(n+1) + diphosphate. DNA-dependent RNA polymerase (RNAP) catalyzes the transcription of DNA into RNA using the four ribonucleoside triphosphates as substrates. The chain is DNA-directed RNA polymerase subunit Rpo5 from Methanothermobacter thermautotrophicus (strain ATCC 29096 / DSM 1053 / JCM 10044 / NBRC 100330 / Delta H) (Methanobacterium thermoautotrophicum).